A 191-amino-acid chain; its full sequence is Small ribosomal subunit protein uS5 (191 aa).

The tract at residues 1-20 (MAAERERGGRERSRDREERD) is disordered. Residues 23-86 (FVDKLVHINR…EAAKRNLTRV (64 aa)) enclose the S5 DRBM domain.

The protein belongs to the universal ribosomal protein uS5 family. In terms of assembly, part of the 30S ribosomal subunit. Contacts proteins S4 and S8.

Its function is as follows. With S4 and S12 plays an important role in translational accuracy. Located at the back of the 30S subunit body where it stabilizes the conformation of the head with respect to the body. The sequence is that of Small ribosomal subunit protein uS5 from Rhodopseudomonas palustris (strain HaA2).